The chain runs to 322 residues: Replication factor C small subunit 2 (322 aa).

44 to 51 (GPPGTGKT) is an ATP binding site.

It belongs to the activator 1 small subunits family. RfcS subfamily. Heteromultimer composed of small subunits (RfcS) and large subunits (RfcL).

Its function is as follows. Part of the RFC clamp loader complex which loads the PCNA sliding clamp onto DNA. This Pyrobaculum arsenaticum (strain DSM 13514 / JCM 11321 / PZ6) protein is Replication factor C small subunit 2.